The chain runs to 702 residues: Elongation factor G (702 aa).

Positions 8–290 constitute a tr-type G domain; that stretch reads SRYRNIGISA…AVIEYLPSPT (283 aa). Residues 17 to 24, 88 to 92, and 142 to 145 contribute to the GTP site; these read AHIDAGKT, DTPGH, and NKMD.

This sequence belongs to the TRAFAC class translation factor GTPase superfamily. Classic translation factor GTPase family. EF-G/EF-2 subfamily.

It localises to the cytoplasm. Functionally, catalyzes the GTP-dependent ribosomal translocation step during translation elongation. During this step, the ribosome changes from the pre-translocational (PRE) to the post-translocational (POST) state as the newly formed A-site-bound peptidyl-tRNA and P-site-bound deacylated tRNA move to the P and E sites, respectively. Catalyzes the coordinated movement of the two tRNA molecules, the mRNA and conformational changes in the ribosome. The polypeptide is Elongation factor G (Edwardsiella ictaluri (strain 93-146)).